The primary structure comprises 1012 residues: Roundabout homolog 4 (1012 aa).

The first 27 residues, 1–27 (MGSGGTGLLGTEWPLPLLLLFIMGGEA), serve as a signal peptide directing secretion. 2 consecutive Ig-like C2-type domains span residues 32–132 (PQIL…ARLS) and 138–225 (EDFQ…ARVS). 2 disulfide bridges follow: Cys-53/Cys-115 and Cys-159/Cys-208. Residues Asn-201 and Asn-247 are each glycosylated (N-linked (GlcNAc...) asparagine). Fibronectin type-III domains lie at 249–346 (TLLN…LPEQ) and 348–443 (PSAP…LEQA). 3 N-linked (GlcNAc...) asparagine glycosylation sites follow: Asn-361, Asn-390, and Asn-397. Disordered stretches follow at residues 533–553 (TSGS…GLDP) and 586–616 (LIAE…AGTS). Over residues 534–550 (SGSRDLSSSSSLSSRLG) the composition is skewed to low complexity. Positions 592-601 (SSPPVRPSPK) are enriched in pro residues. Asn-681 and Asn-713 each carry an N-linked (GlcNAc...) asparagine glycan. The interval 711–801 (HRNSSELASR…LEEEEDQDSV (91 aa)) is disordered. The span at 745–759 (LQAPSSDPLPAAPLS) shows a compositional bias: low complexity. Residues 760-771 (VLNSSRPSSPQA) are compositionally biased toward polar residues. N-linked (GlcNAc...) asparagine glycosylation is found at Asn-762 and Asn-783. The segment covering 772–791 (SFLSCPSPSSSNLSSSSLSS) has biased composition (low complexity). A phosphoserine mark is found at Ser-814 and Ser-947. The segment at 980–1012 (RLGRGLPPWPPDSRASSQRSWLTGAVPKAGDSS) is disordered.

Belongs to the immunoglobulin superfamily. ROBO family. Interacts with SLIT2 and ENAH. As to expression, expressed specifically in embryo and adult vascular endothelium.

In terms of biological role, receptor for Slit proteins, at least for SLIT2, and seems to be involved in angiogenesis and vascular patterning. May mediate the inhibition of primary endothelial cell migration by Slit proteins. Involved in the maintenance of endothelial barrier organization and function. This Mus musculus (Mouse) protein is Roundabout homolog 4 (Robo4).